The sequence spans 193 residues: Cysteine and glycine-rich protein 1 (193 aa).

In terms of domain architecture, LIM zinc-binding 1 spans 10–61 (CGVCQKTVYFAEEVQCEGNSFHKSCFLCMVCKKNLDSTTVAVHGEEIYCKSC). A Nuclear localization signal motif is present at residues 64–69 (KKYGPK). Serine 81 bears the Phosphoserine mark. N6-acetyllysine is present on lysine 84. Residue lysine 91 forms a Glycyl lysine isopeptide (Lys-Gly) (interchain with G-Cter in SUMO2) linkage. Residues lysine 112, lysine 131, lysine 137, and lysine 161 each carry the N6-acetyllysine modification. The 52-residue stretch at 119 to 170 (CPRCSQAVYAAEKVIGAGKSWHKSCFRCAKCGKGLESTTLADKDGEIYCKGC) folds into the LIM zinc-binding 2 domain. Serine 192 carries the post-translational modification Phosphoserine.

In terms of assembly, interacts with ASCC1; ASCC2 and TRIP4.

The protein localises to the nucleus. Functionally, could play a role in neuronal development. This is Cysteine and glycine-rich protein 1 (Csrp1) from Mus musculus (Mouse).